Consider the following 245-residue polypeptide: 5-oxoprolinase subunit A (245 aa).

This sequence belongs to the LamB/PxpA family. Forms a complex composed of PxpA, PxpB and PxpC.

It catalyses the reaction 5-oxo-L-proline + ATP + 2 H2O = L-glutamate + ADP + phosphate + H(+). Catalyzes the cleavage of 5-oxoproline to form L-glutamate coupled to the hydrolysis of ATP to ADP and inorganic phosphate. The protein is 5-oxoprolinase subunit A of Haemophilus influenzae (strain PittGG).